The primary structure comprises 277 residues: Probable septum site-determining protein MinC (277 aa).

The tract at residues Thr107–Asp168 is disordered. Residues Gly122 to Ala142 show a composition bias toward basic and acidic residues.

It belongs to the MinC family. As to quaternary structure, interacts with MinD and FtsZ.

Its function is as follows. Cell division inhibitor that blocks the formation of polar Z ring septums. Rapidly oscillates between the poles of the cell to destabilize FtsZ filaments that have formed before they mature into polar Z rings. Prevents FtsZ polymerization. In Mesorhizobium japonicum (strain LMG 29417 / CECT 9101 / MAFF 303099) (Mesorhizobium loti (strain MAFF 303099)), this protein is Probable septum site-determining protein MinC.